A 124-amino-acid chain; its full sequence is Small ribosomal subunit protein bS6 (124 aa).

The disordered stretch occupies residues 96-124 (ETAPSPMMKEVQREEARKAAQTTTEGQAA). Positions 115–124 (AQTTTEGQAA) are enriched in polar residues.

The protein belongs to the bacterial ribosomal protein bS6 family.

Binds together with bS18 to 16S ribosomal RNA. This chain is Small ribosomal subunit protein bS6, found in Cupriavidus necator (strain ATCC 17699 / DSM 428 / KCTC 22496 / NCIMB 10442 / H16 / Stanier 337) (Ralstonia eutropha).